Here is a 412-residue protein sequence, read N- to C-terminus: Dihydrolipoyllysine-residue acetyltransferase component of pyruvate dehydrogenase complex (412 aa).

The Lipoyl-binding domain occupies 2 to 78; it reads PIKILMPALS…PVNSLIAVLS (77 aa). Lysine 43 is modified (N6-lipoyllysine). Residues 132-169 enclose the Peripheral subunit-binding (PSBD) domain; it reads FASPLAKRLAKMRNIRFESVKGSGPHGRIVKQDILSYT. Histidine 385 is an active-site residue.

The protein belongs to the 2-oxoacid dehydrogenase family. Forms a 24-polypeptide structural core with octahedral symmetry. It depends on (R)-lipoate as a cofactor.

It carries out the reaction N(6)-[(R)-dihydrolipoyl]-L-lysyl-[protein] + acetyl-CoA = N(6)-[(R)-S(8)-acetyldihydrolipoyl]-L-lysyl-[protein] + CoA. Functionally, the pyruvate dehydrogenase complex catalyzes the overall conversion of pyruvate to acetyl-CoA and CO(2). It contains multiple copies of three enzymatic components: pyruvate dehydrogenase (E1), dihydrolipoamide acetyltransferase (E2) and lipoamide dehydrogenase (E3). This chain is Dihydrolipoyllysine-residue acetyltransferase component of pyruvate dehydrogenase complex (pdhC), found in Rickettsia conorii (strain ATCC VR-613 / Malish 7).